The sequence spans 506 residues: Sodium-coupled neutral amino acid symporter 2 (506 aa).

Residues 1–23 (MKKAEMGRFSISPDEDSSSYSSN) form a disordered region. Residues 1–76 (MKKAEMGRFS…HPGTTSFGMS (76 aa)) lie on the Cytoplasmic side of the membrane. Residues 1-96 (MKKAEMGRFS…SGILGLSYAM (96 aa)) are regulates protein turnover upon amino acid deprivation. Ser-10, Ser-12, Ser-21, Ser-22, and Ser-55 each carry phosphoserine. The chain crosses the membrane as a helical span at residues 77–96 (VFNLSNAIVGSGILGLSYAM). Asn-82 is a binding site for Na(+). Over 97–102 (ANTGIA) the chain is Extracellular. The chain crosses the membrane as a helical span at residues 103 to 123 (LFIILLTFVSIFSLYSVHLLL). Over 124 to 158 (KTANEGGSLLYEQLGYKAFGLVGKLAASGSITMQN) the chain is Cytoplasmic. Residues 159–177 (IGAMSSYLFIVKYELPLVI) traverse the membrane as a helical segment. Residues 178–188 (QALTNIEDKTG) are Extracellular-facing. Residues 189-209 (LWYLNGNYLVLLVSLVVILPL) traverse the membrane as a helical segment. Over 210 to 217 (SLFRNLGY) the chain is Cytoplasmic. Residues 218 to 238 (LGYTSGLSLLCMVFFLIVVIC) form a helical membrane-spanning segment. At 239–292 (KKFQVPCPVEAALIINETINTTLTQPTALVPALSHNVTENDSCRPHYFIFNSQT) the chain is on the extracellular side. An intrachain disulfide couples Cys-245 to Cys-281. N-linked (GlcNAc...) asparagine glycans are attached at residues Asn-258 and Asn-274. Residues 293–313 (VYAVPILIFSFVCHPAVLPIY) traverse the membrane as a helical segment. The Cytoplasmic segment spans residues 314–329 (EELKDRSRRRMMNVSK). Residues 330–350 (ISFFAMFLMYLLAALFGYLTF) form a helical membrane-spanning segment. Topologically, residues 351 to 371 (YEHVESELLHTYSSILGTDIL) are extracellular. The chain crosses the membrane as a helical span at residues 372–392 (LLIVRLAVLMAVTLTVPVVIF). Thr-386 lines the Na(+) pocket. Topologically, residues 393 to 413 (PIRSSVTHLLCASKDFSWWRH) are cytoplasmic. Residues 414-434 (SLITVSILAFTNLLVIFVPTI) traverse the membrane as a helical segment. Residues 435–436 (RD) are Extracellular-facing. The helical transmembrane segment at 437-457 (IFGFIGASAASMLIFILPSAF) threads the bilayer. At 458 to 472 (YIKLVKKEPMKSVQK) the chain is on the cytoplasmic side. The helical transmembrane segment at 473–495 (IGALFFLLSGVLVMTGSMALIVL) threads the bilayer. The Extracellular portion of the chain corresponds to 496–506 (DWVHNAPGGGH).

The protein belongs to the amino acid/polyamine transporter 2 family. Post-translationally, polyubiquitination by NEDD4L regulates the degradation and the activity of SLC38A2. In terms of tissue distribution, ubiquitously expressed. Expressed in neocortex. Widely expressed in the central nervous system with higher concentrations in caudal regions. Expressed by glutamatergic and GABAergic neurons together with astrocytes and other non-neuronal cells in the cerebral cortex (at protein level).

The protein resides in the cell membrane. The enzyme catalyses L-alanine(in) + Na(+)(in) = L-alanine(out) + Na(+)(out). The catalysed reaction is glycine(in) + Na(+)(in) = glycine(out) + Na(+)(out). It catalyses the reaction L-serine(in) + Na(+)(in) = L-serine(out) + Na(+)(out). It carries out the reaction L-proline(in) + Na(+)(in) = L-proline(out) + Na(+)(out). The enzyme catalyses L-methionine(in) + Na(+)(in) = L-methionine(out) + Na(+)(out). The catalysed reaction is L-histidine(in) + Na(+)(in) = L-histidine(out) + Na(+)(out). It catalyses the reaction L-asparagine(in) + Na(+)(in) = L-asparagine(out) + Na(+)(out). It carries out the reaction L-glutamine(in) + Na(+)(in) = L-glutamine(out) + Na(+)(out). The enzyme catalyses L-threonine(in) + Na(+)(in) = L-threonine(out) + Na(+)(out). The catalysed reaction is L-leucine(in) + Na(+)(in) = L-leucine(out) + Na(+)(out). It catalyses the reaction L-phenylalanine(in) + Na(+)(in) = L-phenylalanine(out) + Na(+)(out). Its activity is regulated as follows. Inhibited by N-methyl-D-glucamine. Inhibited by choline. Allosteric regulation of sodium ions binding by pH. Functionally, symporter that cotransports neutral amino acids and sodium ions from the extracellular to the intracellular side of the cell membrane. The transport is pH-sensitive, Li(+)-intolerant, electrogenic, driven by the Na(+) electrochemical gradient and cotransports of neutral amino acids and sodium ions with a stoichiometry of 1:1. May function in the transport of amino acids at the blood-brain barrier. May function in the transport of amino acids in the supply of maternal nutrients to the fetus through the placenta. Maintains a key metabolic glutamine/glutamate balance underpinning retrograde signaling by dendritic release of the neurotransmitter glutamate. Transports L-proline in differentiating osteoblasts for the efficient synthesis of proline-enriched proteins and provides proline essential for osteoblast differentiation and bone formation during bone development. The polypeptide is Sodium-coupled neutral amino acid symporter 2 (Homo sapiens (Human)).